The following is a 154-amino-acid chain: 6,7-dimethyl-8-ribityllumazine synthase (154 aa).

5-amino-6-(D-ribitylamino)uracil-binding positions include Phe-23, 57 to 59 (AFE), and 81 to 83 (AVI). 86 to 87 (ST) contacts (2S)-2-hydroxy-3-oxobutyl phosphate. Residue His-89 is the Proton donor of the active site. A 5-amino-6-(D-ribitylamino)uracil-binding site is contributed by Phe-114. Arg-128 contributes to the (2S)-2-hydroxy-3-oxobutyl phosphate binding site.

Belongs to the DMRL synthase family.

It catalyses the reaction (2S)-2-hydroxy-3-oxobutyl phosphate + 5-amino-6-(D-ribitylamino)uracil = 6,7-dimethyl-8-(1-D-ribityl)lumazine + phosphate + 2 H2O + H(+). It functions in the pathway cofactor biosynthesis; riboflavin biosynthesis; riboflavin from 2-hydroxy-3-oxobutyl phosphate and 5-amino-6-(D-ribitylamino)uracil: step 1/2. In terms of biological role, catalyzes the formation of 6,7-dimethyl-8-ribityllumazine by condensation of 5-amino-6-(D-ribitylamino)uracil with 3,4-dihydroxy-2-butanone 4-phosphate. This is the penultimate step in the biosynthesis of riboflavin. The protein is 6,7-dimethyl-8-ribityllumazine synthase of Campylobacter jejuni subsp. doylei (strain ATCC BAA-1458 / RM4099 / 269.97).